The following is a 201-amino-acid chain: 3-isopropylmalate dehydratase small subunit (201 aa).

This sequence belongs to the LeuD family. LeuD type 1 subfamily. Heterodimer of LeuC and LeuD.

The catalysed reaction is (2R,3S)-3-isopropylmalate = (2S)-2-isopropylmalate. It functions in the pathway amino-acid biosynthesis; L-leucine biosynthesis; L-leucine from 3-methyl-2-oxobutanoate: step 2/4. Its function is as follows. Catalyzes the isomerization between 2-isopropylmalate and 3-isopropylmalate, via the formation of 2-isopropylmaleate. The protein is 3-isopropylmalate dehydratase small subunit of Paramagnetospirillum magneticum (strain ATCC 700264 / AMB-1) (Magnetospirillum magneticum).